The chain runs to 464 residues: Cysteine--tRNA ligase (464 aa).

Residue Cys-28 participates in Zn(2+) binding. The 'HIGH' region signature appears at 30–40 (VTVYDFCHIGH). Positions 209, 234, and 238 each coordinate Zn(2+). A 'KMSKS' region motif is present at residues 266-270 (KMSKS). Lys-269 contacts ATP.

It belongs to the class-I aminoacyl-tRNA synthetase family. Monomer. The cofactor is Zn(2+).

Its subcellular location is the cytoplasm. It catalyses the reaction tRNA(Cys) + L-cysteine + ATP = L-cysteinyl-tRNA(Cys) + AMP + diphosphate. The chain is Cysteine--tRNA ligase (cysS) from Buchnera aphidicola subsp. Acyrthosiphon pisum (strain APS) (Acyrthosiphon pisum symbiotic bacterium).